The primary structure comprises 103 residues: Co-chaperonin GroES (103 aa).

This sequence belongs to the GroES chaperonin family. Heptamer of 7 subunits arranged in a ring. Interacts with the chaperonin GroEL.

Its subcellular location is the cytoplasm. Functionally, together with the chaperonin GroEL, plays an essential role in assisting protein folding. The GroEL-GroES system forms a nano-cage that allows encapsulation of the non-native substrate proteins and provides a physical environment optimized to promote and accelerate protein folding. GroES binds to the apical surface of the GroEL ring, thereby capping the opening of the GroEL channel. This chain is Co-chaperonin GroES, found in Parasynechococcus marenigrum (strain WH8102).